Here is a 613-residue protein sequence, read N- to C-terminus: Lysophospholipase 1 (613 aa).

A signal peptide spans 1–21; it reads MLFRGLSLWMLFLASCLSALA. One can recognise a PLA2c domain in the interval 55–593; it reads DCPSDNIVES…YNYCWSGLYD (539 aa). Asn142, Asn173, Asn220, Asn244, Asn281, Asn319, Asn348, Asn365, Asn494, Asn499, Asn523, Asn551, and Asn572 each carry an N-linked (GlcNAc...) asparagine glycan.

This sequence belongs to the lysophospholipase family.

The protein resides in the secreted. It catalyses the reaction a 1-acyl-sn-glycero-3-phosphocholine + H2O = sn-glycerol 3-phosphocholine + a fatty acid + H(+). Its function is as follows. Catalyzes the release of fatty acids from lysophospholipids. Required for survival under high osmolarity, for normal osmotic stress-induced gene expression, and for nutrient-mediated repression of sexual differentiation. This chain is Lysophospholipase 1 (plb1), found in Schizosaccharomyces pombe (strain 972 / ATCC 24843) (Fission yeast).